Reading from the N-terminus, the 582-residue chain is Formate--tetrahydrofolate ligase (582 aa).

Residue Thr-65–Thr-72 coordinates ATP.

The protein belongs to the formate--tetrahydrofolate ligase family.

It catalyses the reaction (6S)-5,6,7,8-tetrahydrofolate + formate + ATP = (6R)-10-formyltetrahydrofolate + ADP + phosphate. It functions in the pathway one-carbon metabolism; tetrahydrofolate interconversion. In Vibrio parahaemolyticus serotype O3:K6 (strain RIMD 2210633), this protein is Formate--tetrahydrofolate ligase.